Reading from the N-terminus, the 708-residue chain is Elongation factor G (708 aa).

Residues 9–289 (MFTRNIGIMA…AVCAFLPSPE (281 aa)) form the tr-type G domain. GTP-binding positions include 18 to 25 (AHIDAGKT), 86 to 90 (DTPGH), and 140 to 143 (NKMD).

This sequence belongs to the TRAFAC class translation factor GTPase superfamily. Classic translation factor GTPase family. EF-G/EF-2 subfamily.

It localises to the cytoplasm. Catalyzes the GTP-dependent ribosomal translocation step during translation elongation. During this step, the ribosome changes from the pre-translocational (PRE) to the post-translocational (POST) state as the newly formed A-site-bound peptidyl-tRNA and P-site-bound deacylated tRNA move to the P and E sites, respectively. Catalyzes the coordinated movement of the two tRNA molecules, the mRNA and conformational changes in the ribosome. This is Elongation factor G from Parabacteroides distasonis (strain ATCC 8503 / DSM 20701 / CIP 104284 / JCM 5825 / NCTC 11152).